The chain runs to 111 residues: KREKSFDCTECGKSFKRKSKLKTHFLCHTGEKPFVCVHCGKGFRDNYKLSLHLRIHTGENLSVCPDCGKSYTDKNKLIVHMRIHTGEKFMCSECGKGFSDFYNLKSHLQIH.

4 C2H2-type zinc fingers span residues 6–28, 34–56, 62–84, and 89–111; these read FDCTECGKSFKRKSKLKTHFLCH, FVCVHCGKGFRDNYKLSLHLRIH, SVCPDCGKSYTDKNKLIVHMRIH, and FMCSECGKGFSDFYNLKSHLQIH.

Belongs to the krueppel C2H2-type zinc-finger protein family.

It localises to the nucleus. In terms of biological role, may be involved in transcriptional regulation. The polypeptide is Gastrula zinc finger protein XlCGF32.1 (Xenopus laevis (African clawed frog)).